A 144-amino-acid chain; its full sequence is Ribosome-binding factor A (144 aa).

The interval 120 to 144 is disordered; it reads DKRRMAESGREEDDAAPDETTEDNA. Over residues 129 to 144 the composition is skewed to acidic residues; that stretch reads REEDDAAPDETTEDNA.

It belongs to the RbfA family. Monomer. Binds 30S ribosomal subunits, but not 50S ribosomal subunits or 70S ribosomes.

Its subcellular location is the cytoplasm. In terms of biological role, one of several proteins that assist in the late maturation steps of the functional core of the 30S ribosomal subunit. Associates with free 30S ribosomal subunits (but not with 30S subunits that are part of 70S ribosomes or polysomes). Required for efficient processing of 16S rRNA. May interact with the 5'-terminal helix region of 16S rRNA. This is Ribosome-binding factor A from Aeromonas hydrophila subsp. hydrophila (strain ATCC 7966 / DSM 30187 / BCRC 13018 / CCUG 14551 / JCM 1027 / KCTC 2358 / NCIMB 9240 / NCTC 8049).